The chain runs to 330 residues: MSNYFSMEAFDYDDIQLVPNKCIIKSRKEADTSVKFGSRTFKIPVVPANMESVIDDDLAIWLAENGYYYVMHRFHPEKRANFIKMMHDKGLFASISVGIKDSEYDFIDYLAKEKIIPEYITIDVAHGHSDYVIKMIKYIKDKLPDTFLTAGNIATPEAVRELENAGADATKVGVGPGRACITKLKTGFGTGGWQLAALRMCSKAARKPLIADGGIRHNGDIAKSVRFGASMVMIGSLFAGHEESPGNLITIDGKRYKQYWGSASEVQKGAYRNVEGKQMLVPYRGSIKDTLREMQEDLQSSISYAGGKDLSAIRVVDYVIVKSSIFDGDK.

Residue Cys-180 is the Thioimidate intermediate of the active site. 209–232 (LIADGGIRHNGDIAKSVRFGASMV) is an NADP(+) binding site.

The protein belongs to the IMPDH/GMPR family. GuaC type 2 subfamily.

It carries out the reaction IMP + NH4(+) + NADP(+) = GMP + NADPH + 2 H(+). In terms of biological role, catalyzes the irreversible NADPH-dependent deamination of GMP to IMP. It functions in the conversion of nucleobase, nucleoside and nucleotide derivatives of G to A nucleotides, and in maintaining the intracellular balance of A and G nucleotides. This chain is GMP reductase, found in Lactobacillus gasseri (strain ATCC 33323 / DSM 20243 / BCRC 14619 / CIP 102991 / JCM 1131 / KCTC 3163 / NCIMB 11718 / NCTC 13722 / AM63).